The chain runs to 119 residues: Small ribosomal subunit protein uS10 (119 aa).

Alanine 2 carries the N-acetylalanine modification. Residue lysine 4 forms a Glycyl lysine isopeptide (Lys-Gly) (interchain with G-Cter in ubiquitin) linkage. Lysine 8 carries the N6-succinyllysine; alternate modification. Lysine 8 is covalently cross-linked (Glycyl lysine isopeptide (Lys-Gly) (interchain with G-Cter in ubiquitin); alternate). At threonine 9 the chain carries Phosphothreonine. 2 positions are modified to N6-acetyllysine: lysine 34 and lysine 75. At serine 93 the chain carries Phosphoserine.

It belongs to the universal ribosomal protein uS10 family. Component of the 40S small ribosomal subunit. Polyubiquitinated by ZNF598 via 'Lys-63'-linked ubiquitin chains when a ribosome has stalled, initiating the ribosome quality control (RQC) pathway to degrade the potentially detrimental aberrant nascent polypeptide. Deubiquitinated by OTUD3 and USP21, antagonizing ZNF598 activity. In terms of processing, ufmylated by UFL1.

It localises to the cytoplasm. Functionally, component of the small ribosomal subunit. The ribosome is a large ribonucleoprotein complex responsible for the synthesis of proteins in the cell. This Rattus norvegicus (Rat) protein is Small ribosomal subunit protein uS10 (Rps20).